Here is a 373-residue protein sequence, read N- to C-terminus: Dual-specificity RNA methyltransferase RlmN (373 aa).

Residue Glu-94 is the Proton acceptor of the active site. The region spanning Glu-100–Asp-339 is the Radical SAM core domain. The cysteines at positions 107 and 344 are disulfide-linked. Residues Cys-114, Cys-118, and Cys-121 each coordinate [4Fe-4S] cluster. S-adenosyl-L-methionine contacts are provided by residues Gly-168–Glu-169, Ser-200, Ser-222–His-224, and Asn-301. The S-methylcysteine intermediate role is filled by Cys-344.

The protein belongs to the radical SAM superfamily. RlmN family. [4Fe-4S] cluster serves as cofactor.

The protein resides in the cytoplasm. It carries out the reaction adenosine(2503) in 23S rRNA + 2 reduced [2Fe-2S]-[ferredoxin] + 2 S-adenosyl-L-methionine = 2-methyladenosine(2503) in 23S rRNA + 5'-deoxyadenosine + L-methionine + 2 oxidized [2Fe-2S]-[ferredoxin] + S-adenosyl-L-homocysteine. It catalyses the reaction adenosine(37) in tRNA + 2 reduced [2Fe-2S]-[ferredoxin] + 2 S-adenosyl-L-methionine = 2-methyladenosine(37) in tRNA + 5'-deoxyadenosine + L-methionine + 2 oxidized [2Fe-2S]-[ferredoxin] + S-adenosyl-L-homocysteine. Specifically methylates position 2 of adenine 2503 in 23S rRNA and position 2 of adenine 37 in tRNAs. m2A2503 modification seems to play a crucial role in the proofreading step occurring at the peptidyl transferase center and thus would serve to optimize ribosomal fidelity. This chain is Dual-specificity RNA methyltransferase RlmN, found in Shewanella oneidensis (strain ATCC 700550 / JCM 31522 / CIP 106686 / LMG 19005 / NCIMB 14063 / MR-1).